The following is a 315-amino-acid chain: MIGMEKPKIETVVLAEDNSYGKFVVEPLERGYGITLGNSLRRILLSSLPGAAVTSVKIDGVLHEFSTLPGVVEDVTDIILNLKQLSLRMHSDEPKVLRLHAEGEGEVTAGDIHTDADVEILNPDLHIATLDKGGRLIAEITVSKGRGYVPADQNKTPDMPIGVIPVDSIFSPIRRVNYTIEHTRVGNKTNYDKLTLEVWTNGAIRPDEACSWAAKILKEHLELFISLTEDADEIEVMQEKEDDERNKLMEMTIEELDLSVRSYNCLKRAGINTIAELVSKTDEEMMKVRNLGKKSLEEVKTKLAAFGLSLRQPDD.

Residues 1–228 (MIGMEKPKIE…EHLELFISLT (228 aa)) are alpha N-terminal domain (alpha-NTD). An alpha C-terminal domain (alpha-CTD) region spans residues 245–315 (RNKLMEMTIE…FGLSLRQPDD (71 aa)).

It belongs to the RNA polymerase alpha chain family. In terms of assembly, homodimer. The RNAP catalytic core consists of 2 alpha, 1 beta, 1 beta' and 1 omega subunit. When a sigma factor is associated with the core the holoenzyme is formed, which can initiate transcription.

The catalysed reaction is RNA(n) + a ribonucleoside 5'-triphosphate = RNA(n+1) + diphosphate. In terms of biological role, DNA-dependent RNA polymerase catalyzes the transcription of DNA into RNA using the four ribonucleoside triphosphates as substrates. This is DNA-directed RNA polymerase subunit alpha from Symbiobacterium thermophilum (strain DSM 24528 / JCM 14929 / IAM 14863 / T).